The following is an 84-amino-acid chain: ATP synthase subunit c (84 aa).

Helical transmembrane passes span 9-29 (IFGS…GFSL) and 54-74 (IVAG…LLFI).

It belongs to the ATPase C chain family. As to quaternary structure, F-type ATPases have 2 components, F(1) - the catalytic core - and F(0) - the membrane proton channel. F(1) has five subunits: alpha(3), beta(3), gamma(1), delta(1), epsilon(1). F(0) has three main subunits: a(1), b(2) and c(10-14). The alpha and beta chains form an alternating ring which encloses part of the gamma chain. F(1) is attached to F(0) by a central stalk formed by the gamma and epsilon chains, while a peripheral stalk is formed by the delta and b chains.

It localises to the cell inner membrane. Its function is as follows. F(1)F(0) ATP synthase produces ATP from ADP in the presence of a proton or sodium gradient. F-type ATPases consist of two structural domains, F(1) containing the extramembraneous catalytic core and F(0) containing the membrane proton channel, linked together by a central stalk and a peripheral stalk. During catalysis, ATP synthesis in the catalytic domain of F(1) is coupled via a rotary mechanism of the central stalk subunits to proton translocation. Functionally, key component of the F(0) channel; it plays a direct role in translocation across the membrane. A homomeric c-ring of between 10-14 subunits forms the central stalk rotor element with the F(1) delta and epsilon subunits. This Histophilus somni (strain 129Pt) (Haemophilus somnus) protein is ATP synthase subunit c.